We begin with the raw amino-acid sequence, 292 residues long: Protoheme IX farnesyltransferase (292 aa).

The next 9 membrane-spanning stretches (helical) occupy residues 13-33 (ILFG…QGSI), 35-55 (ILLL…GCVV), 84-104 (VALV…WFGV), 106-126 (GYAF…YSLW), 135-155 (TVIG…AVTH), 161-181 (ALLL…AIAI), 206-226 (IECV…YCFG), 231-251 (FFLI…IIGF), and 263-283 (FFLY…FTYQ).

Belongs to the UbiA prenyltransferase family. Protoheme IX farnesyltransferase subfamily.

It is found in the cell inner membrane. The enzyme catalyses heme b + (2E,6E)-farnesyl diphosphate + H2O = Fe(II)-heme o + diphosphate. The protein operates within porphyrin-containing compound metabolism; heme O biosynthesis; heme O from protoheme: step 1/1. Converts heme B (protoheme IX) to heme O by substitution of the vinyl group on carbon 2 of heme B porphyrin ring with a hydroxyethyl farnesyl side group. The protein is Protoheme IX farnesyltransferase of Acinetobacter baumannii (strain AB307-0294).